Here is a 305-residue protein sequence, read N- to C-terminus: MTEVDLKALLADVDGDVATELASKPEVIDKGHELDISTLPIQARKWHKLRDAVAVVADLKSSTQLGLNKHAASTASIYEAATGGVVQIFDEFDANFVAIQGDGAFALFWGDKRRQRAVCAGITIKTFSFKHLVPRLEKKWDGLPETGLKVGLGSSPLLVKRVGVPRTEHQEPVWAGRAVNYAAKAAQQADRHEMVVTGTIWDWVSDNDFLAVTCSCSNPNPDLWSNITIEKIPDGDGDREGKRLTSSWCDVHGPEYCAAVLEGKKRRADVTTQRTSALAAEMKSWVRNKAAQDRKNRLARYQGLH.

Asp58 and Asp102 together coordinate Mn(2+).

It belongs to the adenylyl cyclase class-4/guanylyl cyclase family. Pyrimidine cyclase subfamily. Homodimer. Mn(2+) serves as cofactor.

It is found in the cytoplasm. The enzyme catalyses GTP = 3',5'-cyclic GMP + diphosphate. It catalyses the reaction UTP = 3',5'-cyclic UMP + diphosphate. Its function is as follows. Pycsar (pyrimidine cyclase system for antiphage resistance) provides immunity against bacteriophage. The pyrimidine cyclase (PycC) synthesizes cyclic nucleotides in response to infection; these serve as specific second messenger signals. The signals activate the adjacent effector, leading to bacterial cell death and abortive phage infection. A clade D Pycsar system. In terms of biological role, the pyrimidine cyclase gene of a two-gene Pycsar system, generates cyclic UMP (cUMP) from UTP as well as cGMP from GTP to a lesser extent, has little to no activity on ATP or CTP. Expression of this and adjacent effector MePycTM (AC A0A1C5G2D0) probably confers resistance to bacteriophage. The genes are probably only expressed in response to bacteriophage infection. This is Uridylate cyclase from Micromonospora echinofusca.